Consider the following 477-residue polypeptide: ATP-dependent rRNA helicase RRP3 (477 aa).

Positions 1–22 are disordered; the sequence is MSVKVDGMINKKSKTHSKKLDA. The Q motif signature appears at 65–93; that stretch reads KSFNELKLIPELLEAIQQMKFTKPTPIQS. One can recognise a Helicase ATP-binding domain in the interval 96 to 267; that stretch reads IPHALEGKDI…RASLHNPVRV (172 aa). 109-116 is an ATP binding site; the sequence is AQTGSGKT. Positions 215 to 218 match the DEAD box motif; that stretch reads DEAD. Positions 294 to 438 constitute a Helicase C-terminal domain; that stretch reads YLIHLLNEFL…KDPSPSKAVL (145 aa). Residues 452–477 are disordered; the sequence is AIRQTKDFHEKRNPKKNRDDRDREER.

This sequence belongs to the DEAD box helicase family. DDX47/RRP3 subfamily. As to quaternary structure, interacts with the SSU processome.

The protein resides in the nucleus. It carries out the reaction ATP + H2O = ADP + phosphate + H(+). Its function is as follows. ATP-dependent rRNA helicase required for pre-ribosomal RNA processing. Involved in the maturation of the 35S-pre-rRNA and to its cleavage to mature 18S rRNA. In Debaryomyces hansenii (strain ATCC 36239 / CBS 767 / BCRC 21394 / JCM 1990 / NBRC 0083 / IGC 2968) (Yeast), this protein is ATP-dependent rRNA helicase RRP3.